A 212-amino-acid chain; its full sequence is MTVRFMDVFTEWASTYDDTVTGHDPEYKEVFRRYEEILDTVATKAISPVVEFGAGTGNLTQRLLDRHQDVLAVEPSPEMREILIDKIPTLPVQDGHFLSFTADHAKSFVSTYAFHHLTDEEKGEAVDLMAQILPQDGKIVYADTMFVSEEARLQTIAEAKAQGFNGLAEDLEREFYPLIPVMEQIFASRGFDVTFTQYNHFVWLVEAEKMGE.

Positions 53 and 74 each coordinate S-adenosyl-L-methionine.

It belongs to the methyltransferase superfamily. YrrT family.

Could be a S-adenosyl-L-methionine-dependent methyltransferase. This is an uncharacterized protein from Exiguobacterium sibiricum (strain DSM 17290 / CCUG 55495 / CIP 109462 / JCM 13490 / 255-15).